Consider the following 269-residue polypeptide: MRDRLFFLLSKYGIRPNDRIGQHFLIVKDVIDKAIEVAEVSKSDVVLEVGPGLGFLTDELSKRAKKVFTIELDRRIIEILRNEYSWNNVEIIQGDAVKVEWPSFNKVVSNIPYQISSPFTFKLLKMEFERAVVMYQLEFALRMTAKPGDRNYSRLSLMTQALADVEIVMRIGKGAFYPKPKVDSALVLITPKKDRIELNESLVKALFQHRRKVVSKALRESAHMLGIKDVKTVKDILSSVPHSNKRVFHLTPEEVKEIEEYLREHRIIS.

Residues His-23, Leu-25, Gly-50, Glu-71, Asp-95, and Asn-110 each contribute to the S-adenosyl-L-methionine site.

The protein belongs to the class I-like SAM-binding methyltransferase superfamily. rRNA adenine N(6)-methyltransferase family. RsmA subfamily.

It is found in the cytoplasm. Specifically dimethylates two adjacent adenosines in the loop of a conserved hairpin near the 3'-end of 16S rRNA in the 30S particle. May play a critical role in biogenesis of 30S subunits. The protein is Probable ribosomal RNA small subunit methyltransferase A of Pyrococcus abyssi (strain GE5 / Orsay).